The sequence spans 54 residues: Large ribosomal subunit protein bL33 (54 aa).

The protein belongs to the bacterial ribosomal protein bL33 family.

The polypeptide is Large ribosomal subunit protein bL33 (Xylella fastidiosa (strain M23)).